The following is a 527-amino-acid chain: Type 2 DNA topoisomerase 6 subunit B (527 aa).

ATP is bound by residues asparagine 39, aspartate 73, serine 94 to lysine 95, glycine 103 to lysine 110, and lysine 421.

It belongs to the TOP6B family. Homodimer. Heterotetramer of two Top6A and two Top6B chains.

It carries out the reaction ATP-dependent breakage, passage and rejoining of double-stranded DNA.. Functionally, relaxes both positive and negative superturns and exhibits a strong decatenase activity. The polypeptide is Type 2 DNA topoisomerase 6 subunit B (Pyrobaculum aerophilum (strain ATCC 51768 / DSM 7523 / JCM 9630 / CIP 104966 / NBRC 100827 / IM2)).